The sequence spans 241 residues: Triosephosphate isomerase (241 aa).

9–11 is a binding site for substrate; sequence NWK. H96 acts as the Electrophile in catalysis. Residue E165 is the Proton acceptor of the active site. Substrate is bound by residues G171, S204, and 225–226; that span reads GG.

It belongs to the triosephosphate isomerase family. In terms of assembly, homodimer.

It localises to the cytoplasm. It carries out the reaction D-glyceraldehyde 3-phosphate = dihydroxyacetone phosphate. Its pathway is carbohydrate biosynthesis; gluconeogenesis. It participates in carbohydrate degradation; glycolysis; D-glyceraldehyde 3-phosphate from glycerone phosphate: step 1/1. Its function is as follows. Involved in the gluconeogenesis. Catalyzes stereospecifically the conversion of dihydroxyacetone phosphate (DHAP) to D-glyceraldehyde-3-phosphate (G3P). The sequence is that of Triosephosphate isomerase from Nostoc sp. (strain PCC 7120 / SAG 25.82 / UTEX 2576).